The following is a 502-amino-acid chain: Protein ANKUB1 (502 aa).

In Homo sapiens (Human), this protein is Protein ANKUB1 (ANKUB1).